The sequence spans 448 residues: B box and SPRY domain-containing protein (448 aa).

Residues 1 to 18 show a composition bias toward low complexity; sequence MSSDVSGTESGSESGPES. Positions 1-58 are disordered; the sequence is MSSDVSGTESGSESGPESVPEPVPEPGPEPESEPGPGPAPGPGPGPAPGPGPGLGREP. Residues 19 to 51 are compositionally biased toward pro residues; that stretch reads VPEPVPEPGPEPESEPGPGPAPGPGPGPAPGPG. The B box-type zinc-finger motif lies at 63 to 111; that stretch reads QPCQLCPEHGKPLSWFCLSERRPVCATCAGFGGRCHRHRIRRAEEHAEE. The 192-residue stretch at 257-448 folds into the B30.2/SPRY domain; the sequence is SPLLTQLWAT…VADQVISIVC (192 aa).

As to quaternary structure, interacts with TRPV5 and TRPV6. Interacts with YWHAZ/14-3-3 protein zeta. As to expression, predominantly expressed in testis. Expressed in brain at low levels.

It is found in the cytoplasm. The protein localises to the membrane. May regulate epithelial calcium transport by inhibiting TRPV5 activity. This is B box and SPRY domain-containing protein (Bspry) from Rattus norvegicus (Rat).